We begin with the raw amino-acid sequence, 334 residues long: Immune-associated nucleotide-binding protein 3 (334 aa).

The AIG1-type G domain occupies 11 to 219; it reads KAVKNIVLVG…FRGKMYLEIK (209 aa). The G1 stretch occupies residues 20-27; sequence GRTGNGKS. Residues 20–28 and serine 41 contribute to the GTP site; that span reads GRTGNGKSA. The interval 47–51 is G2; sequence GVTKT. The G3 stretch occupies residues 69–72; the sequence is DTPG. The segment at 139–142 is G4; that stretch reads TGGD. A G5 region spans residues 178–180; it reads NNM. Asparagine 179 contributes to the GTP binding site. Residues 272–306 adopt a coiled-coil conformation; sequence SAAHERMVSMLNENLENAHRENIDLRKAHDHEQKK.

The protein belongs to the TRAFAC class TrmE-Era-EngA-EngB-Septin-like GTPase superfamily. AIG1/Toc34/Toc159-like paraseptin GTPase family. IAN subfamily. Mostly expressed in pollen. Also detected in lateral roots and radicles.

This is Immune-associated nucleotide-binding protein 3 from Arabidopsis thaliana (Mouse-ear cress).